The following is a 284-amino-acid chain: NAD kinase (284 aa).

The Proton acceptor role is filled by Asp70. Residues 70–71 (DG), 139–140 (NE), Lys167, Asp169, Leu177, 180–185 (TAYNLS), and Gln236 contribute to the NAD(+) site.

This sequence belongs to the NAD kinase family. The cofactor is a divalent metal cation.

It localises to the cytoplasm. It carries out the reaction NAD(+) + ATP = ADP + NADP(+) + H(+). Functionally, involved in the regulation of the intracellular balance of NAD and NADP, and is a key enzyme in the biosynthesis of NADP. Catalyzes specifically the phosphorylation on 2'-hydroxyl of the adenosine moiety of NAD to yield NADP. The protein is NAD kinase of Helicobacter pylori (strain G27).